Here is a 338-residue protein sequence, read N- to C-terminus: Ketol-acid reductoisomerase (NADP(+)) (338 aa).

One can recognise a KARI N-terminal Rossmann domain in the interval 1-181 (MKVYYDKDCD…GGGRTGIIET (181 aa)). Residues 24–27 (YGSQ), Arg47, Ser50, Thr52, and 82–85 (DEFQ) contribute to the NADP(+) site. His107 is a catalytic residue. An NADP(+)-binding site is contributed by Gly133. One can recognise a KARI C-terminal knotted domain in the interval 182–327 (TFKDETETDL…EQLRSMMPWI (146 aa)). Residues Asp190, Glu194, Glu226, and Glu230 each contribute to the Mg(2+) site. Residue Ser251 participates in substrate binding.

This sequence belongs to the ketol-acid reductoisomerase family. Requires Mg(2+) as cofactor.

The catalysed reaction is (2R)-2,3-dihydroxy-3-methylbutanoate + NADP(+) = (2S)-2-acetolactate + NADPH + H(+). It catalyses the reaction (2R,3R)-2,3-dihydroxy-3-methylpentanoate + NADP(+) = (S)-2-ethyl-2-hydroxy-3-oxobutanoate + NADPH + H(+). It participates in amino-acid biosynthesis; L-isoleucine biosynthesis; L-isoleucine from 2-oxobutanoate: step 2/4. The protein operates within amino-acid biosynthesis; L-valine biosynthesis; L-valine from pyruvate: step 2/4. Functionally, involved in the biosynthesis of branched-chain amino acids (BCAA). Catalyzes an alkyl-migration followed by a ketol-acid reduction of (S)-2-acetolactate (S2AL) to yield (R)-2,3-dihydroxy-isovalerate. In the isomerase reaction, S2AL is rearranged via a Mg-dependent methyl migration to produce 3-hydroxy-3-methyl-2-ketobutyrate (HMKB). In the reductase reaction, this 2-ketoacid undergoes a metal-dependent reduction by NADPH to yield (R)-2,3-dihydroxy-isovalerate. The polypeptide is Ketol-acid reductoisomerase (NADP(+)) (Pseudomonas fluorescens (strain SBW25)).